A 184-amino-acid chain; its full sequence is MKPTPAELYANLISSTGEDLQRPGLQGTPARAATAFEYLTSGYKQSVQEVVNDALFPSDSNDMVVVRDIELFSLCEHHMLPFIGKAHVGYIPTGKVLGLSKVARIIDMYARRLQIQEQLTHQVASTIAEVTGAAGVGVIIEAKHLCMMMRGVEKQNSVMKTSAMLGSFRANLSTRSEFLALLNN.

Zn(2+) is bound by residues Cys75, His78, and Cys146.

This sequence belongs to the GTP cyclohydrolase I family. Homomer.

The catalysed reaction is GTP + H2O = 7,8-dihydroneopterin 3'-triphosphate + formate + H(+). The protein operates within cofactor biosynthesis; 7,8-dihydroneopterin triphosphate biosynthesis; 7,8-dihydroneopterin triphosphate from GTP: step 1/1. This Teredinibacter turnerae (strain ATCC 39867 / T7901) protein is GTP cyclohydrolase 1.